A 131-amino-acid chain; its full sequence is D-ribose pyranase (131 aa).

Histidine 20 functions as the Proton donor in the catalytic mechanism. Substrate-binding positions include aspartate 28, histidine 98, and 120-122; that span reads YAN.

This sequence belongs to the RbsD / FucU family. RbsD subfamily. In terms of assembly, homodecamer.

The protein resides in the cytoplasm. It catalyses the reaction beta-D-ribopyranose = beta-D-ribofuranose. Its pathway is carbohydrate metabolism; D-ribose degradation; D-ribose 5-phosphate from beta-D-ribopyranose: step 1/2. Catalyzes the interconversion of beta-pyran and beta-furan forms of D-ribose. In Bacillus cereus (strain B4264), this protein is D-ribose pyranase.